The sequence spans 367 residues: ELAV-like protein 3 (367 aa).

RRM domains follow at residues 39–117 (TNLI…YARP), 125–205 (ANLY…FANN), and 284–362 (WCIF…FKTS).

The protein belongs to the RRM elav family. As to quaternary structure, interacts with MAP1B light chain LC1. As to expression, brain specific.

In terms of biological role, RNA-binding protein that binds to AU-rich element (ARE) sequences of target mRNAs, including VEGF mRNA. May also bind poly-A tracts via RRM 3. May be involved in neuronal differentiation and maintenance. Plays a role in the stabilization of GAP43 mRNA and in spatial learning. This Homo sapiens (Human) protein is ELAV-like protein 3 (ELAVL3).